Reading from the N-terminus, the 454-residue chain is Exopolyphosphatase PRUNE1 (454 aa).

M1 is modified (N-acetylmethionine). Residues D28, D30, D106, and D179 each contribute to the Mn(2+) site. The DHH motif motif lies at 106-108 (DHH). The tract at residues 394-421 (SLISGLSQDEEDPPLPPTPMNSLVDECP) is essential for homodimerization. The tract at residues 397–420 (SGLSQDEEDPPLPPTPMNSLVDEC) is disordered. S400 carries the phosphoserine modification. Position 411 is a phosphothreonine (T411). A Phosphoserine modification is found at S415.

It belongs to the PPase class C family. Prune subfamily. In terms of assembly, homooligomer. Able to homodimerize via its C-terminal domain. Interacts with NME1. Interacts with GSK3; at focal adhesion complexes where paxillin and vinculin are colocalized. Interacts with alpha and beta tubulin. Mn(2+) is required as a cofactor.

The protein localises to the cytoplasm. It is found in the nucleus. The protein resides in the cell junction. Its subcellular location is the focal adhesion. The catalysed reaction is diphosphate + H2O = 2 phosphate + H(+). With respect to regulation, activated by magnesium ions and inhibited by manganese ions. Inhibited by dipyridamole, moderately sensitive to IBMX and inhibited by vinpocetine. In terms of biological role, phosphodiesterase (PDE) that has higher activity toward cAMP than cGMP, as substrate. Plays a role in cell proliferation, migration and differentiation, and acts as a negative regulator of NME1. Plays a role in the regulation of neurogenesis. Involved in the regulation of microtubule polymerization. The polypeptide is Exopolyphosphatase PRUNE1 (Prune1) (Mus musculus (Mouse)).